The primary structure comprises 471 residues: Siroheme synthase 1 (471 aa).

Residues 1 to 203 form a precorrin-2 dehydrogenase /sirohydrochlorin ferrochelatase region; it reads MDYLPLFAEL…GNSAEAEKAL (203 aa). NAD(+) is bound by residues 22-23 and 43-44; these read EI and ET. Position 128 is a phosphoserine (S128). The uroporphyrinogen-III C-methyltransferase stretch occupies residues 215–471; the sequence is GEIILVGAGP…GFNASVVNLA (257 aa). P224 contributes to the S-adenosyl-L-methionine binding site. D247 serves as the catalytic Proton acceptor. K269 functions as the Proton donor in the catalytic mechanism. Residues 300–302, I305, 330–331, M382, and G411 each bind S-adenosyl-L-methionine; these read GGD and TA.

This sequence in the N-terminal section; belongs to the precorrin-2 dehydrogenase / sirohydrochlorin ferrochelatase family. It in the C-terminal section; belongs to the precorrin methyltransferase family.

The enzyme catalyses uroporphyrinogen III + 2 S-adenosyl-L-methionine = precorrin-2 + 2 S-adenosyl-L-homocysteine + H(+). It catalyses the reaction precorrin-2 + NAD(+) = sirohydrochlorin + NADH + 2 H(+). It carries out the reaction siroheme + 2 H(+) = sirohydrochlorin + Fe(2+). It participates in cofactor biosynthesis; adenosylcobalamin biosynthesis; precorrin-2 from uroporphyrinogen III: step 1/1. It functions in the pathway cofactor biosynthesis; adenosylcobalamin biosynthesis; sirohydrochlorin from precorrin-2: step 1/1. The protein operates within porphyrin-containing compound metabolism; siroheme biosynthesis; precorrin-2 from uroporphyrinogen III: step 1/1. Its pathway is porphyrin-containing compound metabolism; siroheme biosynthesis; siroheme from sirohydrochlorin: step 1/1. It participates in porphyrin-containing compound metabolism; siroheme biosynthesis; sirohydrochlorin from precorrin-2: step 1/1. Its function is as follows. Multifunctional enzyme that catalyzes the SAM-dependent methylations of uroporphyrinogen III at position C-2 and C-7 to form precorrin-2 via precorrin-1. Then it catalyzes the NAD-dependent ring dehydrogenation of precorrin-2 to yield sirohydrochlorin. Finally, it catalyzes the ferrochelation of sirohydrochlorin to yield siroheme. The protein is Siroheme synthase 1 of Klebsiella pneumoniae subsp. pneumoniae (strain ATCC 700721 / MGH 78578).